Reading from the N-terminus, the 761-residue chain is Subtilisin-like protease SBT3.15 (761 aa).

Positions 1–21 are cleaved as a signal peptide; the sequence is MENSFLSSKLVFLLAIALVLF. Residues 22–120 constitute a propeptide, activation peptide; the sequence is LNTELSFLTA…VIPNRILKLK (99 aa). In terms of domain architecture, Inhibitor I9 spans 41-119; it reads VYIVYLGQRE…HVIPNRILKL (79 aa). The Peptidase S8 domain maps to 134-613; it reads PTSFSSSSSA…GGLVNPEKAA (480 aa). Asparagine 151 carries an N-linked (GlcNAc...) asparagine glycan. The active-site Charge relay system is the aspartate 164. Residue asparagine 197 is glycosylated (N-linked (GlcNAc...) asparagine). The Charge relay system role is filled by histidine 241. Residues asparagine 256 and asparagine 384 are each glycosylated (N-linked (GlcNAc...) asparagine). Serine 544 acts as the Charge relay system in catalysis. N-linked (GlcNAc...) asparagine glycosylation occurs at asparagine 636.

This sequence belongs to the peptidase S8 family.

The protein resides in the secreted. This Arabidopsis thaliana (Mouse-ear cress) protein is Subtilisin-like protease SBT3.15.